The following is a 203-amino-acid chain: Small ribosomal subunit protein uS4 (203 aa).

The S4 RNA-binding domain occupies Arg93–Val156.

Belongs to the universal ribosomal protein uS4 family. Part of the 30S ribosomal subunit. Contacts protein S5. The interaction surface between S4 and S5 is involved in control of translational fidelity.

One of the primary rRNA binding proteins, it binds directly to 16S rRNA where it nucleates assembly of the body of the 30S subunit. Functionally, with S5 and S12 plays an important role in translational accuracy. The chain is Small ribosomal subunit protein uS4 from Streptococcus thermophilus (strain CNRZ 1066).